Consider the following 255-residue polypeptide: Pimeloyl-[acyl-carrier protein] methyl ester esterase (255 aa).

An AB hydrolase-1 domain is found at Leu-16–Glu-241. Substrate contacts are provided by residues Trp-22, Ser-82–Leu-83, and Phe-143–Gln-147. The active-site Nucleophile is the Ser-82. Active-site residues include Asp-207 and His-235. Position 235 (His-235) interacts with substrate.

This sequence belongs to the AB hydrolase superfamily. Carboxylesterase BioH family. In terms of assembly, monomer.

Its subcellular location is the cytoplasm. It carries out the reaction 6-carboxyhexanoyl-[ACP] methyl ester + H2O = 6-carboxyhexanoyl-[ACP] + methanol + H(+). The protein operates within cofactor biosynthesis; biotin biosynthesis. The physiological role of BioH is to remove the methyl group introduced by BioC when the pimeloyl moiety is complete. It allows to synthesize pimeloyl-ACP via the fatty acid synthetic pathway through the hydrolysis of the ester bonds of pimeloyl-ACP esters. The chain is Pimeloyl-[acyl-carrier protein] methyl ester esterase from Vibrio cholerae serotype O1 (strain ATCC 39315 / El Tor Inaba N16961).